The chain runs to 167 residues: Small ribosomal subunit protein mS25 (167 aa).

This sequence belongs to the mitochondrion-specific ribosomal protein mS25 family. As to quaternary structure, component of the mitochondrial ribosome small subunit (28S) which comprises a 12S rRNA and about 30 distinct proteins.

Its subcellular location is the mitochondrion. The polypeptide is Small ribosomal subunit protein mS25 (mRpS25) (Drosophila melanogaster (Fruit fly)).